The sequence spans 389 residues: uncharacterized protein (389 aa).

This is an uncharacterized protein from Treponema pallidum (strain Nichols).